A 318-amino-acid chain; its full sequence is Lysophospholipase D GDPD3 (318 aa).

The Cytoplasmic portion of the chain corresponds to 1 to 2; sequence MS. The helical transmembrane segment at 3 to 23 threads the bilayer; it reads LLLYYALPALGSYAMLSIFFL. Topologically, residues 24–198 are extracellular; the sequence is RRPHLLHTPR…KAANPEMPLS (175 aa). Positions 39–308 constitute a GP-PDE domain; sequence IRLGAHRGGS…DYPTALRHYL (270 aa). A divalent metal cation is bound by residues Glu-71, Asp-73, and His-86. Residues 199-221 traverse the membrane as a helical segment; that stretch reads FTISRGFWVLLSYYLGLLPFIPI. Over 222–318 the chain is Cytoplasmic; that stretch reads PEKFFFCFLP…DNHGPAARTS (97 aa).

This sequence belongs to the glycerophosphoryl diester phosphodiesterase family. As to expression, widely expressed, with high level in kidney and ovary.

The protein resides in the membrane. Its subcellular location is the cytoplasm. It localises to the perinuclear region. It is found in the endoplasmic reticulum. It carries out the reaction 1-hexadecanoyl-sn-glycero-3-phosphocholine + H2O = 1-hexadecanoyl-sn-glycero-3-phosphate + choline + H(+). The catalysed reaction is 1-hexadecanoyl-sn-glycero-3-phosphocholine + H2O = sn-glycerol 3-phosphocholine + hexadecanoate + H(+). The enzyme catalyses 1-O-(1Z-octadecenyl)-sn-glycero-3-phospho-N-hexadecanoyl-ethanolamine + H2O = 1-O-(1Z-octadecenyl)-sn-glycero-3-phosphate + N-hexadecanoylethanolamine + H(+). It catalyses the reaction N-(5Z,8Z,11Z,14Z-eicosatetraenoyl)-1-(9Z-octadecenoyl)-sn-glycero-3-phosphoethanolamine + H2O = N-(5Z,8Z,11Z,14Z-eicosatetraenoyl)-ethanolamine + 1-(9Z-octadecenoyl)-sn-glycero-3-phosphate + H(+). It carries out the reaction N,1-di-(9Z-octadecenoyl)-sn-glycero-3-phosphoethanolamine + H2O = N-(9Z-octadecenoyl) ethanolamine + 1-(9Z-octadecenoyl)-sn-glycero-3-phosphate + H(+). The catalysed reaction is N-hexadecanoyl-1-(9Z-octadecenoyl)-sn-glycero-3-phosphoethanolamine + H2O = N-hexadecanoylethanolamine + 1-(9Z-octadecenoyl)-sn-glycero-3-phosphate + H(+). The enzyme catalyses 1-O-hexadecyl-sn-glycero-3-phosphocholine + H2O = 1-O-hexadecyl-sn-glycero-3-phosphate + choline + H(+). Lysophospholipase D activity is stimulated by calcium. Loss of lysophospholipase D activity in presence of EDTA. Hydrolyzes lysoglycerophospholipids to produce lysophosphatidic acid (LPA) and the corresponding amines. Shows a preference for 1-O-alkyl-sn-glycero-3-phosphocholine (lyso-PAF), lysophosphatidylcholine (lyso-PC) and N-acylethanolamine lysophospholipids. Does not display glycerophosphodiester phosphodiesterase activity, since it cannot hydrolyze either glycerophosphoinositol or glycerophosphocholine. This chain is Lysophospholipase D GDPD3, found in Homo sapiens (Human).